The following is a 98-amino-acid chain: NADH-ubiquinone oxidoreductase chain 4L (98 aa).

The next 3 helical transmembrane spans lie at Pro2–Phe22, Ser29–Leu49, and Ile61–Val81.

It belongs to the complex I subunit 4L family. Core subunit of respiratory chain NADH dehydrogenase (Complex I) which is composed of 45 different subunits.

It localises to the mitochondrion inner membrane. It carries out the reaction a ubiquinone + NADH + 5 H(+)(in) = a ubiquinol + NAD(+) + 4 H(+)(out). Functionally, core subunit of the mitochondrial membrane respiratory chain NADH dehydrogenase (Complex I) which catalyzes electron transfer from NADH through the respiratory chain, using ubiquinone as an electron acceptor. Part of the enzyme membrane arm which is embedded in the lipid bilayer and involved in proton translocation. This is NADH-ubiquinone oxidoreductase chain 4L (MT-ND4L) from Eulemur coronatus (Crowned lemur).